We begin with the raw amino-acid sequence, 209 residues long: uncharacterized protein (209 aa).

The protein localises to the plastid. It localises to the chloroplast. This is an uncharacterized protein from Porphyra purpurea (Red seaweed).